An 852-amino-acid polypeptide reads, in one-letter code: MEEFRFLYLIYSAAFALCLVVSVLAQDQSGFISIDCGIPSGSSYKDDTTGINYVSDSSFVETGVSKSIPFTAQRQLQNLRSFPEGSRNCYTLIPIQGKGKKYLIRASFMYGNYDGENGSPEFDLFLGGNIWDTVLLSNGSSIVSKEVVYLSQSENIFVCLGNKGKGTPFISTLELRFLGNDNTTYDSPNGALFFSRRWDLRSLMGSPVRYDDDVYDRIWIPRNFGYCREINTSLPVTSDNNSYSLSSLVMSTAMTPINTTRPITMTLENSDPNVRYFVYMHFAEVEDLSLKPNQTREFDISINGVTVAAGFSPKYLQTNTFFLNPESQSKIAFSLVRTPKSTLPPIVNALEIYVANSFSQSLTNQEDGDAVTSLKTSYKVKKNWHGDPCLPNDYIWEGLNCSYDSLTPPRITSLNLSSSGLTGHISSSFSNLTMIQELDLSNNGLTGDIPEFLSKLKFLRVLNLENNTLTGSVPSELLERSNTGSFSLRLGENPGLCTEISCRKSNSKKLVIPLVASFAALFILLLLSGVFWRIRNRRNKSVNSAPQTSPMAKSENKLLFTFADVIKMTNNFGQVLGKGGFGTVYHGFYDNLQVAVKLLSETSAQGFKEFRSEVEVLVRVHHVNLTALIGYFHEGDQMGLIYEFMANGNMADHLAGKYQHTLSWRQRLQIALDAAQGLEYLHCGCKPPIVHRDVKTSNILLNEKNRAKLADFGLSRSFHTESRSHVSTLVAGTPGYLDPLCFETNGLNEKSDIYSFGVVLLEMITGKTVIKESQTKRVHVSDWVISILRSTNDVNNVIDSKMAKDFDVNSVWKVVELALSSVSQNVSDRPNMPHIVRGLNECLQREESNKNY.

Positions Met1–Ala25 are cleaved as a signal peptide. Topologically, residues Gln26–Leu510 are extracellular. N-linked (GlcNAc...) asparagine glycosylation is found at Asn138, Asn182, Asn231, Asn240, Asn258, Asn293, Asn400, Asn415, and Asn431. LRR repeat units follow at residues Arg410–Leu432, Met434–Lys457, and Phe458–Glu479. Residue Asn466 is glycosylated (N-linked (GlcNAc...) asparagine). Residues Val511–Phe531 form a helical membrane-spanning segment. Topologically, residues Trp532–Tyr852 are cytoplasmic. The residue at position 561 (Thr561) is a Phosphothreonine. The Protein kinase domain maps to Asn570–Leu843. ATP-binding positions include Leu576–Val584 and Lys597. A Phosphotyrosine modification is found at Tyr642. Asp693 (proton acceptor) is an active-site residue. Phosphoserine occurs at positions 697 and 727. Phosphothreonine is present on residues Thr728 and Thr733.

This sequence belongs to the protein kinase superfamily. Ser/Thr protein kinase family.

The protein localises to the membrane. The enzyme catalyses L-seryl-[protein] + ATP = O-phospho-L-seryl-[protein] + ADP + H(+). The catalysed reaction is L-threonyl-[protein] + ATP = O-phospho-L-threonyl-[protein] + ADP + H(+). The chain is Probable LRR receptor-like serine/threonine-protein kinase At1g05700 from Arabidopsis thaliana (Mouse-ear cress).